Consider the following 416-residue polypeptide: UDP-N-acetylglucosamine 1-carboxyvinyltransferase (416 aa).

A phosphoenolpyruvate-binding site is contributed by 22–23; that stretch reads KN. R92 contacts UDP-N-acetyl-alpha-D-glucosamine. C116 (proton donor) is an active-site residue. C116 carries the post-translational modification 2-(S-cysteinyl)pyruvic acid O-phosphothioketal. UDP-N-acetyl-alpha-D-glucosamine contacts are provided by residues 121-125, D304, and I326; that span reads RPVDQ.

Belongs to the EPSP synthase family. MurA subfamily.

The protein resides in the cytoplasm. The enzyme catalyses phosphoenolpyruvate + UDP-N-acetyl-alpha-D-glucosamine = UDP-N-acetyl-3-O-(1-carboxyvinyl)-alpha-D-glucosamine + phosphate. Its pathway is cell wall biogenesis; peptidoglycan biosynthesis. Its function is as follows. Cell wall formation. Adds enolpyruvyl to UDP-N-acetylglucosamine. In Cupriavidus pinatubonensis (strain JMP 134 / LMG 1197) (Cupriavidus necator (strain JMP 134)), this protein is UDP-N-acetylglucosamine 1-carboxyvinyltransferase.